The primary structure comprises 423 residues: DUF21 domain-containing protein At2g14520 (423 aa).

Topologically, residues 1–11 are extracellular; it reads MAVEYECCGTS. The region spanning 8–191 is the CNNM transmembrane domain; the sequence is CGTSFFIHIA…GKGGELTHDE (184 aa). The chain crosses the membrane as a helical span at residues 12–32; the sequence is FFIHIAVIVLLVLFAGLMSGL. Residues 33–70 lie on the Cytoplasmic side of the membrane; it reads TLGLMSMSLVDLEVLAKSGTPRDRIHAAKILPVVKNQH. Residues 71-91 traverse the membrane as a helical segment; it reads LLLCTLLICNAAAMEALPIFL. At 92–94 the chain is on the extracellular side; the sequence is DAL. The helical transmembrane segment at 95–115 threads the bilayer; that stretch reads VTAWGAILISVTLILLFGEII. Residues 116 to 136 are Cytoplasmic-facing; the sequence is PQSVCSRHGLAIGATVAPFVR. Residues 137-157 form a helical membrane-spanning segment; that stretch reads VLVWICLPVAWPISKLLDFLL. The Extracellular portion of the chain corresponds to 158–423; the sequence is GHGRVALFRR…DETDHHFEDL (266 aa). The CBS 1 domain maps to 210–271; it reads MTPISDTFVI…TINPDEEIQV (62 aa). N-linked (GlcNAc...) asparagine glycans are attached at residues Asn-273 and Asn-322. 2 consecutive CBS domains span residues 275–332 and 356–415; these read TIRR…RVDV and PNRA…IFDE.

It localises to the membrane. This chain is DUF21 domain-containing protein At2g14520 (CBSDUF3), found in Arabidopsis thaliana (Mouse-ear cress).